Consider the following 1233-residue polypeptide: Rho guanine nucleotide exchange factor 10-like protein (1233 aa).

Residues 1–10 (MASSNPPPQP) are compositionally biased toward pro residues. The interval 1-93 (MASSNPPPQP…GTGVPAWVSN (93 aa)) is disordered. The span at 26–46 (EAEDDPGEAFEFDDSDDEEDT) shows a compositional bias: acidic residues. A Phosphoserine modification is found at Ser40. Residues 72 to 89 (PVTDPDPAAAPPGTGVPA) are compositionally biased toward low complexity. A phosphotyrosine mark is found at Tyr131 and Tyr152. The tract at residues 159 to 193 (GAPRQAEDLGWSSSEFESYSEDSGEEAKPEVEPAK) is disordered. Over residues 183 to 193 (EEAKPEVEPAK) the composition is skewed to basic and acidic residues. Ser240 bears the Phosphoserine mark. The DH domain occupies 275 to 462 (VRRHILGSIV…ETLAEKLNEQ (188 aa)). The segment covering 1089 to 1104 (QEEAEGPRAEEEKPDG) has biased composition (basic and acidic residues). 2 disordered regions span residues 1089–1117 (QEEA…HVGR) and 1140–1161 (PLLS…SEED).

As to quaternary structure, interacts with RHOA, RHOB and RHOC.

The protein resides in the cytoplasm. Functionally, acts as a guanine nucleotide exchange factor (GEF) for RHOA, RHOB and RHOC. The polypeptide is Rho guanine nucleotide exchange factor 10-like protein (ARHGEF10L) (Pongo abelii (Sumatran orangutan)).